The chain runs to 263 residues: ATP synthase subunit delta (263 aa).

It belongs to the ATPase delta chain family. In terms of assembly, F-type ATPases have 2 components, F(1) - the catalytic core - and F(0) - the membrane proton channel. F(1) has five subunits: alpha(3), beta(3), gamma(1), delta(1), epsilon(1). F(0) has three main subunits: a(1), b(2) and c(10-14). The alpha and beta chains form an alternating ring which encloses part of the gamma chain. F(1) is attached to F(0) by a central stalk formed by the gamma and epsilon chains, while a peripheral stalk is formed by the delta and b chains.

The protein localises to the cell membrane. F(1)F(0) ATP synthase produces ATP from ADP in the presence of a proton or sodium gradient. F-type ATPases consist of two structural domains, F(1) containing the extramembraneous catalytic core and F(0) containing the membrane proton channel, linked together by a central stalk and a peripheral stalk. During catalysis, ATP synthesis in the catalytic domain of F(1) is coupled via a rotary mechanism of the central stalk subunits to proton translocation. Its function is as follows. This protein is part of the stalk that links CF(0) to CF(1). It either transmits conformational changes from CF(0) to CF(1) or is implicated in proton conduction. In Leifsonia xyli subsp. xyli (strain CTCB07), this protein is ATP synthase subunit delta.